The following is a 415-amino-acid chain: Fructose-like permease IIC component (415 aa).

The Cytoplasmic portion of the chain corresponds to 1-46 (MAIKKRSATVVPGASGAAAAVKNLQASKSSFWGELPQHVMSGISRM). The region spanning 35 to 415 (LPQHVMSGIS…RKGKLLIDSL (381 aa)) is the PTS EIIC type-2 domain. The chain crosses the membrane as a helical span at residues 47–67 (VPTLIMGGVILAFSQLIAYSW). Residues 68 to 101 (LKIPAEIGIMDALNSGKFSGFDLSLLKFAWLSQS) lie on the Periplasmic side of the membrane. A helical membrane pass occupies residues 102–122 (FGGVLFGFAIPMFAAFVANSI). Over 123–126 (GGKL) the chain is Cytoplasmic. Residues 127 to 147 (AFPAGFIGGLMSTQPTQLLNF) form a helical membrane-spanning segment. Residues 148 to 157 (DPSTMQWATS) lie on the Periplasmic side of the membrane. A helical transmembrane segment spans residues 158 to 178 (SPVPSTFIGALIISIVAGYLV). Over 179-197 (KWMNQKIQLPDFLLAFKTT) the chain is Cytoplasmic. A helical transmembrane segment spans residues 198-218 (FLLPILSAIFVMLAMYYVITP). At 219-237 (FGGWINGGIRTVLTAAGEK) the chain is on the periplasmic side. A helical transmembrane segment spans residues 238–258 (GALMYAMGIAAATAIDLGGPI). Residues 259-276 (NKAAGFVAFSFTTDHVLP) lie on the Cytoplasmic side of the membrane. The chain crosses the membrane as a helical span at residues 277-297 (VTARSIAIVIPPIGLGLATII). Residues 298-318 (DRRLTGKRLFNAQLYPQGKTA) are Periplasmic-facing. The helical transmembrane segment at 319–339 (MFLAFMGISEGAIPFALESPI) threads the bilayer. The Cytoplasmic segment spans residues 340-341 (TA). The helical transmembrane segment at 342–362 (IPSYMVGAIVGSTAAVWLGAV) threads the bilayer. The Periplasmic portion of the chain corresponds to 363–378 (QWFPESAIWAWPLVTN). The helical transmembrane segment at 379-399 (LGVYMAGIALGAIITALMVVF) threads the bilayer. Residues 400–415 (LRLMMFRKGKLLIDSL) lie on the Cytoplasmic side of the membrane.

It is found in the cell inner membrane. Its function is as follows. The phosphoenolpyruvate-dependent sugar phosphotransferase system (PTS), a major carbohydrate active -transport system, catalyzes the phosphorylation of incoming sugar substrates concomitant with their translocation across the cell membrane. This Shigella flexneri protein is Fructose-like permease IIC component (fryC).